Consider the following 166-residue polypeptide: Fer3-like protein (166 aa).

The tract at residues 57–88 (FEEGDPEEEECEVDQGDGEEEEEEERGRGVSL) is disordered. The segment covering 60 to 80 (GDPEEEECEVDQGDGEEEEEE) has biased composition (acidic residues). One can recognise a bHLH domain in the interval 101-153 (AQRQAANIRERKRMFNLNEAFDQLRRKVPTFAYEKRLSRIETLRLAIVYISFM).

As to quaternary structure, heterodimer with TCF3/E12. Interacts with the bHLH domain of TCF3/E12.

The protein resides in the nucleus. Functionally, transcription factor that binds to the E-box and functions as inhibitor of transcription. DNA binding requires dimerization with an E protein. Inhibits transcription activation by ASCL1/MASH1 by sequestering E proteins. In Homo sapiens (Human), this protein is Fer3-like protein (FERD3L).